The chain runs to 152 residues: Small ribosomal subunit protein uS11 (152 aa).

This sequence belongs to the universal ribosomal protein uS11 family. As to quaternary structure, component of the small ribosomal subunit. Part of the small subunit (SSU) processome, composed of more than 70 proteins and the RNA chaperone small nucleolar RNA (snoRNA) U3.

It localises to the cytoplasm. The protein localises to the nucleus. Its subcellular location is the nucleolus. Component of the small ribosomal subunit. The ribosome is a large ribonucleoprotein complex responsible for the synthesis of proteins in the cell. Part of the small subunit (SSU) processome, first precursor of the small eukaryotic ribosomal subunit. During the assembly of the SSU processome in the nucleolus, many ribosome biogenesis factors, an RNA chaperone and ribosomal proteins associate with the nascent pre-rRNA and work in concert to generate RNA folding, modifications, rearrangements and cleavage as well as targeted degradation of pre-ribosomal RNA by the RNA exosome. This Caenorhabditis elegans protein is Small ribosomal subunit protein uS11 (rps-14).